A 267-amino-acid polypeptide reads, in one-letter code: MPQALPATIVATHLERIRRSVPLTHVITNDVVTGFTANVLLALGAAPAMITAPEEAGSFAAIASVLSVNVGTLTSAQAATIRIAVQSANQAGTPWVLDPVAAGVLPYRTELCRELLQQHPAAIRGNASEIMALAGQAAAGKGVDSANQSDQAIEAAQVLAKSSGAIVAVTGEIDYITDGERVVSIKAGDPLMTRVTGTGCALSSVVAAFIAGCEEKDRLDAVASACAVMAIAGQRAAAKAKGPGSFVPAFLDNLYLLDAVTIAEALA.

Residue Met-49 coordinates substrate. Arg-124 and Thr-170 together coordinate ATP. Gly-197 is a substrate binding site.

It belongs to the Thz kinase family. It depends on Mg(2+) as a cofactor.

The enzyme catalyses 5-(2-hydroxyethyl)-4-methylthiazole + ATP = 4-methyl-5-(2-phosphooxyethyl)-thiazole + ADP + H(+). Its pathway is cofactor biosynthesis; thiamine diphosphate biosynthesis; 4-methyl-5-(2-phosphoethyl)-thiazole from 5-(2-hydroxyethyl)-4-methylthiazole: step 1/1. Functionally, catalyzes the phosphorylation of the hydroxyl group of 4-methyl-5-beta-hydroxyethylthiazole (THZ). In Tolumonas auensis (strain DSM 9187 / NBRC 110442 / TA 4), this protein is Hydroxyethylthiazole kinase.